The sequence spans 1033 residues: Calcium-transporting ATPase 12, plasma membrane-type (1033 aa).

N-acetylmethionine is present on Met1. Residues 1-152 are Cytoplasmic-facing; the sequence is MRDLKEYDYS…NTYHKPPPKG (152 aa). Positions 25-36 are interaction with calmodulin; that stretch reads QRRWRFAYAAIY. Ser37 is modified (phosphoserine). A helical membrane pass occupies residues 153–173; it reads LLFFVYEAFKDLTILILLVCA. Topologically, residues 174–191 are lumenal; it reads IFSLGFGIKEHGIKEGWY. Residues 192 to 212 traverse the membrane as a helical segment; sequence EGGSIFVAVFLVIVVSALSNF. The Cytoplasmic portion of the chain corresponds to 213–341; that stretch reads RQERQFDKLS…SERTPLQVRL (129 aa). The helical transmembrane segment at 342–361 threads the bilayer; the sequence is DTLTSTIGKIGLTVAALVLV. The Lumenal portion of the chain corresponds to 362–397; it reads VLLVRYFTGNTEKEGKREYNGSKTPVDTVVNSVVRI. The chain crosses the membrane as a helical span at residues 398–415; sequence VAAAVTIVVVAIPEGLPL. The Cytoplasmic portion of the chain corresponds to 416 to 806; sequence AVTLTLAYSM…KWGRCVYNNI (391 aa). The active-site 4-aspartylphosphate intermediate is Asp453. Residues Asp751 and Asp755 each contribute to the Mg(2+) site. Residues 807 to 825 traverse the membrane as a helical segment; it reads QKFIQFQLTVNVAALVINF. Over 826-836 the chain is Lumenal; the sequence is IAAISAGEVPL. Residues 837 to 857 traverse the membrane as a helical segment; that stretch reads TAVQLLWVNLIMDTLGALALA. Over 858–877 the chain is Cytoplasmic; that stretch reads TERPTNELLKRKPVGRTEAL. A helical membrane pass occupies residues 878 to 900; it reads ITNVMWRNLLVQSLYQIAVLLIL. The Lumenal portion of the chain corresponds to 901–909; it reads QFKGMSIFS. The helical transmembrane segment at 910-930 threads the bilayer; it reads VRKEVKDTLIFNTFVLCQVFN. Over 931 to 948 the chain is Cytoplasmic; it reads EFNAREMEKKNVFKGLHR. Residues 949–970 form a helical membrane-spanning segment; it reads NRLFIGIIAITIVLQVIMVEFL. Over 971–980 the chain is Lumenal; sequence KKFADTVRLN. The chain crosses the membrane as a helical span at residues 981–1002; it reads GWQWGTCIALASLSWPIGFFTK. The Cytoplasmic segment spans residues 1003–1006; sequence FIPV.

The protein belongs to the cation transport ATPase (P-type) (TC 3.A.3) family. Type IIB subfamily.

The protein resides in the membrane. The catalysed reaction is Ca(2+)(in) + ATP + H2O = Ca(2+)(out) + ADP + phosphate + H(+). Activated by calmodulin. This magnesium-dependent enzyme catalyzes the hydrolysis of ATP coupled with the translocation of calcium from the cytosol out of the cell or into organelles. This is Calcium-transporting ATPase 12, plasma membrane-type (ACA12) from Arabidopsis thaliana (Mouse-ear cress).